Reading from the N-terminus, the 202-residue chain is 3-isopropylmalate dehydratase small subunit (202 aa).

Belongs to the LeuD family. LeuD type 1 subfamily. In terms of assembly, heterodimer of LeuC and LeuD.

It carries out the reaction (2R,3S)-3-isopropylmalate = (2S)-2-isopropylmalate. It functions in the pathway amino-acid biosynthesis; L-leucine biosynthesis; L-leucine from 3-methyl-2-oxobutanoate: step 2/4. Its function is as follows. Catalyzes the isomerization between 2-isopropylmalate and 3-isopropylmalate, via the formation of 2-isopropylmaleate. The sequence is that of 3-isopropylmalate dehydratase small subunit from Rhizobium etli (strain ATCC 51251 / DSM 11541 / JCM 21823 / NBRC 15573 / CFN 42).